The chain runs to 212 residues: Ropporin-1 (212 aa).

Residues 12–43 (PELPELLKQFTKAAIRSQPQDLIQWAAEYFGA) form the RIIa domain. Serine 56 is subject to Phosphoserine. The tract at residues 209–212 (VRLE) is interaction with RHPN1.

Belongs to the ropporin family. Homodimer. Interacts with AKAP3. May interact with SPA17. Interacts with RHPN1. Interacts with FSCB; the interaction increases upon spermatozoa capacitation conditions. Interacts with CFAP61. In terms of processing, sumoylated, sumoylation decreases upon spermatozoa capacitation conditions.

It localises to the cell projection. It is found in the cilium. The protein localises to the flagellum. Important for male fertility. With ROPN1L, involved in fibrous sheath integrity and sperm motility, plays a role in PKA-dependent signaling processes required for spermatozoa capacitation. The protein is Ropporin-1 (ROPN1) of Bos taurus (Bovine).